The chain runs to 1589 residues: Mediator of RNA polymerase II transcription subunit 23 (1589 aa).

The segment at 1381-1499 is disordered; it reads YVSQNEPAPP…PPTPAPMHHQ (119 aa). Positions 1392–1410 are enriched in basic and acidic residues; sequence TPEREKTPERKDQQKEQQE. Residues 1457–1470 are compositionally biased toward low complexity; it reads LHHQQQQQQHLSQM.

This sequence belongs to the Mediator complex subunit 23 family. As to quaternary structure, component of the Mediator complex.

The protein resides in the nucleus. Its function is as follows. Component of the Mediator complex, a coactivator involved in the regulated transcription of nearly all RNA polymerase II-dependent genes. Mediator functions as a bridge to convey information from gene-specific regulatory proteins to the basal RNA polymerase II transcription machinery. Mediator is recruited to promoters by direct interactions with regulatory proteins and serves as a scaffold for the assembly of a functional preinitiation complex with RNA polymerase II and the general transcription factors. The chain is Mediator of RNA polymerase II transcription subunit 23 (sur-2) from Caenorhabditis briggsae.